The chain runs to 177 residues: Negative modulator of initiation of replication (177 aa).

This sequence belongs to the SeqA family. Homodimer. Polymerizes to form helical filaments.

The protein localises to the cytoplasm. In terms of biological role, negative regulator of replication initiation, which contributes to regulation of DNA replication and ensures that replication initiation occurs exactly once per chromosome per cell cycle. Binds to pairs of hemimethylated GATC sequences in the oriC region, thus preventing assembly of replication proteins and re-initiation at newly replicated origins. Repression is relieved when the region becomes fully methylated. The polypeptide is Negative modulator of initiation of replication (Vibrio cholerae serotype O1 (strain ATCC 39315 / El Tor Inaba N16961)).